A 201-amino-acid polypeptide reads, in one-letter code: Small ribosomal subunit protein uS4c (201 aa).

The S4 RNA-binding domain maps to 89–150 (MRLDNILFRL…KQRSKVLIQN (62 aa)).

Belongs to the universal ribosomal protein uS4 family. As to quaternary structure, part of the 30S ribosomal subunit. Contacts protein S5. The interaction surface between S4 and S5 is involved in control of translational fidelity.

Its subcellular location is the plastid. The protein localises to the chloroplast. In terms of biological role, one of the primary rRNA binding proteins, it binds directly to 16S rRNA where it nucleates assembly of the body of the 30S subunit. Its function is as follows. With S5 and S12 plays an important role in translational accuracy. This Dioscorea elephantipes (Elephant's foot yam) protein is Small ribosomal subunit protein uS4c (rps4).